The primary structure comprises 147 residues: Allograft inflammatory factor 1 (147 aa).

Serine 2 bears the N-acetylserine mark. Residue lysine 11 is modified to N6-acetyllysine. Serine 39 is modified (phosphoserine). The region spanning 45 to 80 (SKLEAFKTKYMEFDLNGNGDIDIMSLKRMLEKLGVP) is the EF-hand 1 domain. Aspartate 58, asparagine 60, asparagine 62, aspartate 64, glutamate 98, threonine 100, and aspartate 105 together coordinate Ca(2+). One can recognise an EF-hand 2; degenerate domain in the interval 81-115 (KTHLELKKLIREVSSGSEETFSYSDFLRMMLGKRS). Residues 127-147 (KNKEHQKPTGPPAKKAISELP) form a disordered region.

Homodimer (Potential). Monomer. Interacts with LCP1. As to expression, cardiac allograft, spleen and testis. Expressed by inflammatory cells (macrophages and neutrophils).

The protein resides in the cytoplasm. Its subcellular location is the cytoskeleton. It localises to the cell projection. It is found in the ruffle membrane. The protein localises to the phagocytic cup. In terms of biological role, actin-binding protein that enhances membrane ruffling and RAC activation. Enhances the actin-bundling activity of LCP1. Binds calcium. Plays a role in RAC signaling and in phagocytosis. May play an role in macrophage activation and function. Promotes the proliferation of vascular smooth muscle cells and of T-lymphocytes. Enhances lymphocyte migration. Plays a role in vascular inflammation. This chain is Allograft inflammatory factor 1 (Aif1), found in Rattus norvegicus (Rat).